The following is a 400-amino-acid chain: Elongation factor Tu-B (400 aa).

The 200-residue stretch at 10 to 209 (KPHVNVGTIG…VVDEYIPTPE (200 aa)) folds into the tr-type G domain. The tract at residues 19–26 (GHVDHGKT) is G1. A GTP-binding site is contributed by 19 to 26 (GHVDHGKT). Residue threonine 26 participates in Mg(2+) binding. The G2 stretch occupies residues 60-64 (GITIN). Positions 81–84 (DCPG) are G3. GTP-binding positions include 81–85 (DCPGH) and 136–139 (NKAD). Residues 136 to 139 (NKAD) form a G4 region. Residues 174–176 (SAL) are G5.

The protein belongs to the TRAFAC class translation factor GTPase superfamily. Classic translation factor GTPase family. EF-Tu/EF-1A subfamily. Monomer.

It is found in the cytoplasm. It carries out the reaction GTP + H2O = GDP + phosphate + H(+). GTP hydrolase that promotes the GTP-dependent binding of aminoacyl-tRNA to the A-site of ribosomes during protein biosynthesis. The sequence is that of Elongation factor Tu-B from Caldanaerobacter subterraneus subsp. tengcongensis (strain DSM 15242 / JCM 11007 / NBRC 100824 / MB4) (Thermoanaerobacter tengcongensis).